Reading from the N-terminus, the 212-residue chain is Protein FAM177A1 (212 aa).

An N-acetylmethionine modification is found at Met-1. A compositionally biased stretch (basic and acidic residues) spans 1–11 (MEGEPASREEG). Positions 1–33 (MEGEPASREEGEAVNASGAAAASAFRESAQQMS) are disordered. Residues 13-29 (AVNASGAAAASAFRESA) show a composition bias toward low complexity. Residue Ser-69 is modified to Phosphoserine. Thr-70 bears the Phosphothreonine mark. The stretch at 135 to 172 (IDEYYRMKKEEEEEEEENRMSEEAERQYQQNKLQADSV) forms a coiled coil. The tract at residues 146-179 (EEEEEENRMSEEAERQYQQNKLQADSVVQSDQPE) is disordered. The span at 161-179 (QYQQNKLQADSVVQSDQPE) shows a compositional bias: polar residues.

Belongs to the FAM177 family.

The chain is Protein FAM177A1 (FAM177A1) from Bos taurus (Bovine).